The chain runs to 206 residues: Large ribosomal subunit protein uL4 (206 aa).

The segment covering 66–77 (QKGTGRARHHSA) has biased composition (basic residues). The segment at 66–96 (QKGTGRARHHSARAPQFRGGGQAHGPVVRSH) is disordered.

The protein belongs to the universal ribosomal protein uL4 family. As to quaternary structure, part of the 50S ribosomal subunit.

Functionally, one of the primary rRNA binding proteins, this protein initially binds near the 5'-end of the 23S rRNA. It is important during the early stages of 50S assembly. It makes multiple contacts with different domains of the 23S rRNA in the assembled 50S subunit and ribosome. In terms of biological role, forms part of the polypeptide exit tunnel. This is Large ribosomal subunit protein uL4 from Brucella anthropi (strain ATCC 49188 / DSM 6882 / CCUG 24695 / JCM 21032 / LMG 3331 / NBRC 15819 / NCTC 12168 / Alc 37) (Ochrobactrum anthropi).